A 258-amino-acid chain; its full sequence is Thiazole synthase (258 aa).

The active-site Schiff-base intermediate with DXP is the Lys-100. Residues Gly-161, 187 to 188 (AG), and 209 to 210 (NS) contribute to the 1-deoxy-D-xylulose 5-phosphate site.

The protein belongs to the ThiG family. As to quaternary structure, homotetramer. Forms heterodimers with either ThiH or ThiS.

It localises to the plastid. The protein resides in the chloroplast. The catalysed reaction is [ThiS sulfur-carrier protein]-C-terminal-Gly-aminoethanethioate + 2-iminoacetate + 1-deoxy-D-xylulose 5-phosphate = [ThiS sulfur-carrier protein]-C-terminal Gly-Gly + 2-[(2R,5Z)-2-carboxy-4-methylthiazol-5(2H)-ylidene]ethyl phosphate + 2 H2O + H(+). It participates in cofactor biosynthesis; thiamine diphosphate biosynthesis. Catalyzes the rearrangement of 1-deoxy-D-xylulose 5-phosphate (DXP) to produce the thiazole phosphate moiety of thiamine. Sulfur is provided by the thiocarboxylate moiety of the carrier protein ThiS. In vitro, sulfur can be provided by H(2)S. The chain is Thiazole synthase from Cyanidioschyzon merolae (strain NIES-3377 / 10D) (Unicellular red alga).